Consider the following 344-residue polypeptide: Selenide, water dikinase (344 aa).

The active site involves Cys-15. Residues Lys-18 and 46–48 each bind ATP; that span reads TKD. A Mg(2+)-binding site is contributed by Asp-49. Residues Asp-66, Asp-89, and 137 to 139 contribute to the ATP site; that span reads GHS. Position 89 (Asp-89) interacts with Mg(2+). A Mg(2+)-binding site is contributed by Asp-225.

The protein belongs to the selenophosphate synthase 1 family. Class I subfamily. Homodimer. Requires Mg(2+) as cofactor.

The catalysed reaction is hydrogenselenide + ATP + H2O = selenophosphate + AMP + phosphate + 2 H(+). In terms of biological role, synthesizes selenophosphate from selenide and ATP. This chain is Selenide, water dikinase, found in Colwellia psychrerythraea (strain 34H / ATCC BAA-681) (Vibrio psychroerythus).